The sequence spans 189 residues: MKKTLMAVGLAAVMSIPFAANAADYVIDTKGAHASINFKVNHLGYSYIKGRFNKFDGEFSYDPANIAASSVVVNVDTRSLDSNHAERDKHIRSADFIDASKYSTATFKSTEVVDKGNGQLEVKGDLTLHGQTKPIVINAEFIGAGQDPWGGQRSGFAGTTRLELKDFGIQVMGASSYVDMELHVEGVQK.

A signal peptide spans 1–22 (MKKTLMAVGLAAVMSIPFAANA).

The protein belongs to the UPF0312 family. Type 1 subfamily.

It localises to the periplasm. This chain is UPF0312 protein VC_A0539, found in Vibrio cholerae serotype O1 (strain ATCC 39315 / El Tor Inaba N16961).